The sequence spans 244 residues: Probable septum site-determining protein MinC (244 aa).

Belongs to the MinC family. As to quaternary structure, interacts with MinD and FtsZ.

Functionally, cell division inhibitor that blocks the formation of polar Z ring septums. Rapidly oscillates between the poles of the cell to destabilize FtsZ filaments that have formed before they mature into polar Z rings. Prevents FtsZ polymerization. The chain is Probable septum site-determining protein MinC from Dichelobacter nodosus (strain VCS1703A).